The sequence spans 495 residues: 3-octaprenyl-4-hydroxybenzoate carboxy-lyase (495 aa).

Mn(2+) is bound at residue N172. Residues 175–177 (IYR), 189–191 (RWL), and 194–195 (RG) contribute to the prenylated FMN site. E238 provides a ligand contact to Mn(2+). D287 acts as the Proton donor in catalysis.

It belongs to the UbiD family. In terms of assembly, homohexamer. Requires prenylated FMN as cofactor. Mn(2+) is required as a cofactor.

It is found in the cell membrane. The enzyme catalyses a 4-hydroxy-3-(all-trans-polyprenyl)benzoate + H(+) = a 2-(all-trans-polyprenyl)phenol + CO2. The protein operates within cofactor biosynthesis; ubiquinone biosynthesis. In terms of biological role, catalyzes the decarboxylation of 3-octaprenyl-4-hydroxy benzoate to 2-octaprenylphenol, an intermediate step in ubiquinone biosynthesis. This Yersinia pestis bv. Antiqua (strain Angola) protein is 3-octaprenyl-4-hydroxybenzoate carboxy-lyase.